The sequence spans 649 residues: 1-deoxy-D-xylulose-5-phosphate synthase (649 aa).

Thiamine diphosphate is bound by residues histidine 73 and 114–116 (SHA). Mg(2+) is bound at residue aspartate 145. Residues 146-147 (GA), asparagine 175, tyrosine 286, and glutamate 367 each bind thiamine diphosphate. Asparagine 175 lines the Mg(2+) pocket.

It belongs to the transketolase family. DXPS subfamily. In terms of assembly, homodimer. Requires Mg(2+) as cofactor. The cofactor is thiamine diphosphate.

The enzyme catalyses D-glyceraldehyde 3-phosphate + pyruvate + H(+) = 1-deoxy-D-xylulose 5-phosphate + CO2. It functions in the pathway metabolic intermediate biosynthesis; 1-deoxy-D-xylulose 5-phosphate biosynthesis; 1-deoxy-D-xylulose 5-phosphate from D-glyceraldehyde 3-phosphate and pyruvate: step 1/1. Catalyzes the acyloin condensation reaction between C atoms 2 and 3 of pyruvate and glyceraldehyde 3-phosphate to yield 1-deoxy-D-xylulose-5-phosphate (DXP). In Rhodococcus jostii (strain RHA1), this protein is 1-deoxy-D-xylulose-5-phosphate synthase.